Here is a 230-residue protein sequence, read N- to C-terminus: 2,3-bisphosphoglycerate-dependent phosphoglycerate mutase (230 aa).

Substrate contacts are provided by residues 8-15, 21-22, Arg60, 87-90, Lys98, 114-115, and 183-184; these read RHGESEWN, TG, ERHY, RR, and GN. Residue His9 is the Tele-phosphohistidine intermediate of the active site. The Proton donor/acceptor role is filled by Glu87.

This sequence belongs to the phosphoglycerate mutase family. BPG-dependent PGAM subfamily.

The catalysed reaction is (2R)-2-phosphoglycerate = (2R)-3-phosphoglycerate. The protein operates within carbohydrate degradation; glycolysis; pyruvate from D-glyceraldehyde 3-phosphate: step 3/5. In terms of biological role, catalyzes the interconversion of 2-phosphoglycerate and 3-phosphoglycerate. This is 2,3-bisphosphoglycerate-dependent phosphoglycerate mutase from Streptococcus mutans serotype c (strain ATCC 700610 / UA159).